The primary structure comprises 122 residues: Phospholipase A2 crotoxin basic chain (122 aa).

Disulfide bonds link Cys-26–Cys-115, Cys-28–Cys-44, Cys-43–Cys-95, Cys-49–Cys-122, Cys-50–Cys-88, Cys-57–Cys-81, and Cys-75–Cys-86. Tyr-27, Gly-29, and Gly-31 together coordinate Ca(2+). His-47 is a catalytic residue. Asp-48 contacts Ca(2+). Asp-89 is a catalytic residue.

In terms of assembly, heterodimer of one acidic (CA also named crotapotin) and one basic (CB) subunits; non-covalently linked. The cofactor is Ca(2+). As to expression, expressed by the venom gland.

The protein localises to the secreted. It carries out the reaction a 1,2-diacyl-sn-glycero-3-phosphocholine + H2O = a 1-acyl-sn-glycero-3-phosphocholine + a fatty acid + H(+). Heterodimer CA-CB: Crotoxin is a potent presynaptic neurotoxin that possesses phospholipase A2 (PLA2) activity and exerts a lethal action by blocking neuromuscular transmission. It consists of a non-covalent association of a basic and weakly toxic PLA2 subunit (CB), with a small acidic, non-enzymatic and non-toxic subunit (CA also named crotapotin). The complex acts by binding to a specific 48-kDa protein (R48) receptor located on presynaptic membranes, forming a transient ternary complex CA-CB-R48, followed by dissociation of the CA-CB complex and release of the CA subunit. At equilibrium, only the CB subunits remain associated with the specific crotoxin receptor. In addition to neurotoxicity, crotoxin has been found to exert nephrotoxicity, and cardiovascular toxicity. Moreover, anti-inflammatory, immunomodulatory, anti-tumor and analgesic effects of crotoxin have also been reported. Functionally, monomer CB: The basic subunit of crotoxin is a snake venom phospholipase A2 (PLA2) that exhibits weak neurotoxicity and strong anticoagulant effects by binding to factor Xa (F10) and inhibiting the prothrombinase activity. In addition, it exerts myotoxicity, nephrotoxicity, and cardiovascular toxicity as well as anti-inflammatory, immunomodulatory, anti-tumor and analgesic effects. Also shows a strong antimicrobial activity against X.axonopodis passiforae (Gram-negative) which is completely dependent on the enzymatic activity. PLA2 catalyzes the calcium-dependent hydrolysis of the 2- acyl groups in 3-sn-phosphoglycerides. The chain is Phospholipase A2 crotoxin basic chain from Crotalus durissus collilineatus (Brazilian rattlesnake).